The chain runs to 434 residues: Histidinol dehydrogenase (434 aa).

NAD(+) contacts are provided by Tyr-130, Gln-191, and Asn-214. Substrate is bound by residues Ser-237, Gln-259, and His-262. Positions 259 and 262 each coordinate Zn(2+). Catalysis depends on proton acceptor residues Glu-327 and His-328. Positions 328, 361, 415, and 420 each coordinate substrate. Asp-361 is a Zn(2+) binding site. His-420 contacts Zn(2+).

It belongs to the histidinol dehydrogenase family. The cofactor is Zn(2+).

It catalyses the reaction L-histidinol + 2 NAD(+) + H2O = L-histidine + 2 NADH + 3 H(+). It functions in the pathway amino-acid biosynthesis; L-histidine biosynthesis; L-histidine from 5-phospho-alpha-D-ribose 1-diphosphate: step 9/9. Its function is as follows. Catalyzes the sequential NAD-dependent oxidations of L-histidinol to L-histidinaldehyde and then to L-histidine. This is Histidinol dehydrogenase from Rhizobium meliloti (strain 1021) (Ensifer meliloti).